Reading from the N-terminus, the 363-residue chain is Phosphoserine aminotransferase (363 aa).

Arg-42 is an L-glutamate binding site. Pyridoxal 5'-phosphate-binding positions include 76–77 (GR), Trp-102, Thr-156, Asp-175, and Gln-198. Position 199 is an N6-(pyridoxal phosphate)lysine (Lys-199). 240 to 241 (NT) provides a ligand contact to pyridoxal 5'-phosphate.

It belongs to the class-V pyridoxal-phosphate-dependent aminotransferase family. SerC subfamily. In terms of assembly, homodimer. Pyridoxal 5'-phosphate serves as cofactor.

The protein localises to the cytoplasm. The enzyme catalyses O-phospho-L-serine + 2-oxoglutarate = 3-phosphooxypyruvate + L-glutamate. The catalysed reaction is 4-(phosphooxy)-L-threonine + 2-oxoglutarate = (R)-3-hydroxy-2-oxo-4-phosphooxybutanoate + L-glutamate. It functions in the pathway amino-acid biosynthesis; L-serine biosynthesis; L-serine from 3-phospho-D-glycerate: step 2/3. The protein operates within cofactor biosynthesis; pyridoxine 5'-phosphate biosynthesis; pyridoxine 5'-phosphate from D-erythrose 4-phosphate: step 3/5. Functionally, catalyzes the reversible conversion of 3-phosphohydroxypyruvate to phosphoserine and of 3-hydroxy-2-oxo-4-phosphonooxybutanoate to phosphohydroxythreonine. This chain is Phosphoserine aminotransferase, found in Shewanella sp. (strain ANA-3).